Here is a 551-residue protein sequence, read N- to C-terminus: Protein GZF3 (551 aa).

Residues 17–43 (DNVFEPKSSENLNSLNQSEEEGHIGRW) are disordered. Residues 131-155 (CKNCLTSTTPLWRRDEHGAMLCNAC) form a GATA-type zinc finger. Disordered stretches follow at residues 212-260 (GRKA…SATK), 379-400 (LAPT…QIRS), and 467-490 (SISN…AKDL). Over residues 228–239 (SQLLMGTSSTAK) the composition is skewed to polar residues. Basic and acidic residues predominate over residues 244-254 (PKTESKERSDS). Over residues 388–400 (DSNPSEVPNQIRS) the composition is skewed to polar residues. A compositionally biased stretch (low complexity) spans 467–477 (SISNSVSSSDV). Residues 478 to 490 (SGRKFENHPAKDL) are compositionally biased toward basic and acidic residues.

The protein localises to the nucleus. The sequence is that of Protein GZF3 (GZF3) from Saccharomyces cerevisiae (strain ATCC 204508 / S288c) (Baker's yeast).